Here is a 350-residue protein sequence, read N- to C-terminus: uncharacterized protein (350 aa).

The interval 330 to 350 (RHPGDLRSEPHYRPSAKLAEF) is disordered. A compositionally biased stretch (basic and acidic residues) spans 331 to 341 (HPGDLRSEPHY).

This is an uncharacterized protein from Mycobacterium tuberculosis.